The following is a 587-amino-acid chain: Putative adhesin (587 aa).

A signal peptide spans M1–A19. An intrachain disulfide couples C211 to C261. An N-linked (GlcNAc...) asparagine glycan is attached at N239. Tandem repeats lie at residues I432–K455, I466–K489, P491–V512, and P513–Y531. The interval I432–Y531 is 4 X 24 AA approximate tandem repeats, Thr-rich. S562 carries the GPI-anchor amidated serine lipid modification. A propeptide spans E563 to I587 (removed in mature form).

In terms of processing, the GPI-anchor is attached to the protein in the endoplasmic reticulum and serves to target the protein to the cell surface. There, the glucosamine-inositol phospholipid moiety is cleaved off and the GPI-modified mannoprotein is covalently attached via its lipidless GPI glycan remnant to the 1,6-beta-glucan of the outer cell wall layer.

Its subcellular location is the cell membrane. The protein resides in the secreted. The protein localises to the cell wall. Functionally, putative adhesion protein. May be involved in cell-cell interaction, interacting with other proteins by salt bridges and hydrogen bonds. This is Putative adhesin from Komagataella phaffii (strain ATCC 76273 / CBS 7435 / CECT 11047 / NRRL Y-11430 / Wegner 21-1) (Yeast).